A 213-amino-acid chain; its full sequence is Isomeliandiol synthase MOI2 (213 aa).

Transmembrane regions (helical) follow at residues 18–38 (AALHAWNGLSLFLIVFISWFI), 52–72 (VLCWWALTGLIHVFQEGYYVF), 109–129 (IESMASVVLGPLSLLAAYALA), 137–157 (ILQFGVSIAQLYGACLYFLSA), and 171–191 (YWAYYVGQSSIWVIVPALIAI). One can recognise an EXPERA domain in the interval 48–190 (MDRVVLCWWA…IWVIVPALIA (143 aa)).

This sequence belongs to the EBP family. As to expression, mainly expressed in petioles.

It localises to the membrane. The enzyme catalyses 7,8-epoxymelianol = isomeliandiol. It functions in the pathway secondary metabolite biosynthesis; terpenoid biosynthesis. Functionally, isomerase involved in the biosynthesis of limonoids triterpene natural products such as azadirachtin, an antifeedant widely used as bioinsecticide, and possessing many medicinal applications including anti-tumoral, anti-malarial, anti-rheumatic, antibacterial, anti-inflammatory, anti-pyretic and diuretic effects. Catalyzes the conversion of 7,8-epoxymelianol to isomeliandiol via skeletal rearrangements. The sequence is that of Isomeliandiol synthase MOI2 from Melia azedarach (Chinaberry tree).